Reading from the N-terminus, the 719-residue chain is Histone-lysine N-methyltransferase SETDB2 (719 aa).

The span at serine 72 to aspartate 82 shows a compositional bias: polar residues. The segment at serine 72–serine 102 is disordered. The MBD domain occupies leucine 157 to glutamine 229. The Pre-SET domain occupies aspartate 291 to glycine 364. Zn(2+) contacts are provided by cysteine 293, cysteine 295, cysteine 299, cysteine 305, cysteine 307, cysteine 345, cysteine 349, cysteine 351, and cysteine 356. Positions valine 367 to glycine 694 constitute an SET domain. S-adenosyl-L-methionine-binding positions include lysine 377 to tryptophan 379 and aspartate 418. Positions phenylalanine 508–glutamate 547 are disordered. The span at aspartate 520 to asparagine 530 shows a compositional bias: basic and acidic residues. The segment covering lysine 532–asparagine 543 has biased composition (polar residues). Residues arginine 648 and asparagine 651–histidine 652 each bind S-adenosyl-L-methionine. Zn(2+) is bound by residues cysteine 654, cysteine 707, cysteine 709, and cysteine 714.

Belongs to the class V-like SAM-binding methyltransferase superfamily. In terms of tissue distribution, ubiquitous. Highest expression in heart, testis and ovary.

It localises to the nucleus. It is found in the chromosome. It carries out the reaction N(6),N(6)-dimethyl-L-lysyl(9)-[histone H3] + S-adenosyl-L-methionine = N(6),N(6),N(6)-trimethyl-L-lysyl(9)-[histone H3] + S-adenosyl-L-homocysteine + H(+). Histone methyltransferase involved in left-right axis specification in early development and mitosis. Specifically trimethylates 'Lys-9' of histone H3 (H3K9me3). H3K9me3 is a specific tag for epigenetic transcriptional repression that recruits HP1 (CBX1, CBX3 and/or CBX5) proteins to methylated histones. Contributes to H3K9me3 in both the interspersed repetitive elements and centromere-associated repeats. Plays a role in chromosome condensation and segregation during mitosis. The sequence is that of Histone-lysine N-methyltransferase SETDB2 (SETDB2) from Homo sapiens (Human).